Consider the following 203-residue polypeptide: Holliday junction branch migration complex subunit RuvA (203 aa).

Residues 1–63 (MIFSVRGEVL…EDSMTLYGFS (63 aa)) form a domain I region. Residues 64–141 (DAENRDLFLA…GPVGASGLTV (78 aa)) are domain II. The tract at residues 141-145 (VGTAA) is flexible linker. Residues 146-203 (DGNAVRGSVVEALVGLGFAAKQAEEATDQVLDGELGKDGAVATSSALRAALSLLGKTR) form a domain III region.

This sequence belongs to the RuvA family. Homotetramer. Forms an RuvA(8)-RuvB(12)-Holliday junction (HJ) complex. HJ DNA is sandwiched between 2 RuvA tetramers; dsDNA enters through RuvA and exits via RuvB. An RuvB hexamer assembles on each DNA strand where it exits the tetramer. Each RuvB hexamer is contacted by two RuvA subunits (via domain III) on 2 adjacent RuvB subunits; this complex drives branch migration. In the full resolvosome a probable DNA-RuvA(4)-RuvB(12)-RuvC(2) complex forms which resolves the HJ.

The protein resides in the cytoplasm. In terms of biological role, the RuvA-RuvB-RuvC complex processes Holliday junction (HJ) DNA during genetic recombination and DNA repair, while the RuvA-RuvB complex plays an important role in the rescue of blocked DNA replication forks via replication fork reversal (RFR). RuvA specifically binds to HJ cruciform DNA, conferring on it an open structure. The RuvB hexamer acts as an ATP-dependent pump, pulling dsDNA into and through the RuvAB complex. HJ branch migration allows RuvC to scan DNA until it finds its consensus sequence, where it cleaves and resolves the cruciform DNA. In Mycobacterium leprae (strain Br4923), this protein is Holliday junction branch migration complex subunit RuvA.